We begin with the raw amino-acid sequence, 210 residues long: Probable GTP-binding protein EngB (210 aa).

The EngB-type G domain maps to 30–204 (QGYEVAFAGR…YKVLAGWMEL (175 aa)). GTP-binding positions include 38–45 (GRSNAGKS), 64–68 (GRTQL), 82–85 (DLPG), 149–152 (TKAD), and 182–185 (LFSA). The Mg(2+) site is built by S45 and T66.

The protein belongs to the TRAFAC class TrmE-Era-EngA-EngB-Septin-like GTPase superfamily. EngB GTPase family. It depends on Mg(2+) as a cofactor.

Necessary for normal cell division and for the maintenance of normal septation. This is Probable GTP-binding protein EngB from Pseudomonas putida (strain W619).